The primary structure comprises 582 residues: Bifunctional lycopene cyclase/phytoene synthase (582 aa).

The segment at Met-1 to Tyr-261 is lycopene beta-cyclase. 6 consecutive transmembrane segments (helical) span residues Cys-34–Ala-54, Lys-59–Ile-79, Ile-99–Phe-121, Tyr-142–Gly-162, Leu-170–Leu-190, and Ala-242–Ala-262. A phytoene synthase region spans residues Tyr-268–Glu-582.

It in the N-terminal section; belongs to the lycopene beta-cyclase family. This sequence in the C-terminal section; belongs to the phytoene/squalene synthase family.

The protein localises to the membrane. The enzyme catalyses all-trans-lycopene = gamma-carotene. The catalysed reaction is gamma-carotene = all-trans-beta-carotene. It catalyses the reaction 2 (2E,6E,10E)-geranylgeranyl diphosphate = 15-cis-phytoene + 2 diphosphate. It functions in the pathway carotenoid biosynthesis; beta-carotene biosynthesis. It participates in carotenoid biosynthesis; phytoene biosynthesis; all-trans-phytoene from geranylgeranyl diphosphate: step 1/1. In terms of biological role, bifunctional enzyme that catalyzes the reactions from geranylgeranyl diphosphate to phytoene (phytoene synthase) and lycopene to beta-carotene via the intermediate gamma-carotene (lycopene cyclase). The protein is Bifunctional lycopene cyclase/phytoene synthase of Aspergillus niger (strain ATCC MYA-4892 / CBS 513.88 / FGSC A1513).